Here is a 429-residue protein sequence, read N- to C-terminus: MNVLIIGSGGREHALAWKVAQDPRVAKVFVAPGNAGTATEAKCENVAIDVLALEQLADFAAKNVQLTIVGPEAPLVAGVVDLFRERGLDIFGPTAGAAQLEGSKAFTKDFLARHRIPTAAYRNFTEVEPALAYLHEQGAPIVIKADGLAAGKGVIVAMNLDEAEAAVRDMLAGNAFGDAGSRVVIEEFLDGEEASFIVMVDGQNVLPMATSQDHKRVGDGDSGPNTGGMGAYSPAPVVTAEVHQRVLDEVIYPTVRGMAEEGNVYTGFLYAGLMIDKSGAPKVIEFNCRFGDPETQPIMVRLESSLVLLVEAALAKALDKVEATWDPRPTVGVVLAAGGYPGDYAKGEVIEGLAEAAALDGKVFHAGTALKDGQVVTSGGRVLCATAIGESVSAAQQQAYRLAEKIRWNGCFYRKDIGYRAIARERGES.

The ATP-grasp domain maps to 108–315 (KDFLARHRIP…LVLLVEAALA (208 aa)). 134 to 195 (LHEQGAPIVI…EEFLDGEEAS (62 aa)) is a binding site for ATP. Residues Glu-285 and Asn-287 each contribute to the Mg(2+) site.

The protein belongs to the GARS family. Mg(2+) serves as cofactor. Mn(2+) is required as a cofactor.

The enzyme catalyses 5-phospho-beta-D-ribosylamine + glycine + ATP = N(1)-(5-phospho-beta-D-ribosyl)glycinamide + ADP + phosphate + H(+). It participates in purine metabolism; IMP biosynthesis via de novo pathway; N(1)-(5-phospho-D-ribosyl)glycinamide from 5-phospho-alpha-D-ribose 1-diphosphate: step 2/2. The sequence is that of Phosphoribosylamine--glycine ligase from Pseudomonas aeruginosa (strain ATCC 15692 / DSM 22644 / CIP 104116 / JCM 14847 / LMG 12228 / 1C / PRS 101 / PAO1).